A 157-amino-acid chain; its full sequence is Crossover junction endodeoxyribonuclease RuvC (157 aa).

Catalysis depends on residues Asp7, Glu67, and Asp140. 3 residues coordinate Mg(2+): Asp7, Glu67, and Asp140.

The protein belongs to the RuvC family. Homodimer which binds Holliday junction (HJ) DNA. The HJ becomes 2-fold symmetrical on binding to RuvC with unstacked arms; it has a different conformation from HJ DNA in complex with RuvA. In the full resolvosome a probable DNA-RuvA(4)-RuvB(12)-RuvC(2) complex forms which resolves the HJ. The cofactor is Mg(2+).

The protein localises to the cytoplasm. The enzyme catalyses Endonucleolytic cleavage at a junction such as a reciprocal single-stranded crossover between two homologous DNA duplexes (Holliday junction).. Its function is as follows. The RuvA-RuvB-RuvC complex processes Holliday junction (HJ) DNA during genetic recombination and DNA repair. Endonuclease that resolves HJ intermediates. Cleaves cruciform DNA by making single-stranded nicks across the HJ at symmetrical positions within the homologous arms, yielding a 5'-phosphate and a 3'-hydroxyl group; requires a central core of homology in the junction. The consensus cleavage sequence is 5'-(A/T)TT(C/G)-3'. Cleavage occurs on the 3'-side of the TT dinucleotide at the point of strand exchange. HJ branch migration catalyzed by RuvA-RuvB allows RuvC to scan DNA until it finds its consensus sequence, where it cleaves and resolves the cruciform DNA. The sequence is that of Crossover junction endodeoxyribonuclease RuvC from Rickettsia bellii (strain OSU 85-389).